A 148-amino-acid polypeptide reads, in one-letter code: Deoxyuridine 5'-triphosphate nucleotidohydrolase (148 aa).

Residues 67 to 69 (RSG), Asn80, 84 to 86 (LID), and Met94 contribute to the substrate site.

This sequence belongs to the dUTPase family. Mg(2+) is required as a cofactor.

It carries out the reaction dUTP + H2O = dUMP + diphosphate + H(+). Its pathway is pyrimidine metabolism; dUMP biosynthesis; dUMP from dCTP (dUTP route): step 2/2. Its function is as follows. This enzyme is involved in nucleotide metabolism: it produces dUMP, the immediate precursor of thymidine nucleotides and it decreases the intracellular concentration of dUTP so that uracil cannot be incorporated into DNA. In Paraburkholderia phymatum (strain DSM 17167 / CIP 108236 / LMG 21445 / STM815) (Burkholderia phymatum), this protein is Deoxyuridine 5'-triphosphate nucleotidohydrolase.